The primary structure comprises 391 residues: Alanine racemase, biosynthetic (391 aa).

The active-site Proton acceptor; specific for D-alanine is the Lys-52. Lys-52 carries the N6-(pyridoxal phosphate)lysine modification. Arg-149 contributes to the substrate binding site. The active-site Proton acceptor; specific for L-alanine is Tyr-271. Residue Met-330 participates in substrate binding.

Belongs to the alanine racemase family. It depends on pyridoxal 5'-phosphate as a cofactor.

The catalysed reaction is L-alanine = D-alanine. The protein operates within amino-acid biosynthesis; D-alanine biosynthesis; D-alanine from L-alanine: step 1/1. It participates in cell wall biogenesis; peptidoglycan biosynthesis. In terms of biological role, catalyzes the interconversion of L-alanine and D-alanine. Provides the D-alanine required for cell wall biosynthesis. The chain is Alanine racemase, biosynthetic (alr) from Agrobacterium fabrum (strain C58 / ATCC 33970) (Agrobacterium tumefaciens (strain C58)).